The following is a 377-amino-acid chain: Nitric oxide reductase FlRd-NAD(+) reductase (377 aa).

The protein belongs to the FAD-dependent oxidoreductase family. Requires FAD as cofactor.

The protein localises to the cytoplasm. It carries out the reaction 2 reduced [nitric oxide reductase rubredoxin domain] + NAD(+) + H(+) = 2 oxidized [nitric oxide reductase rubredoxin domain] + NADH. Its pathway is nitrogen metabolism; nitric oxide reduction. Functionally, one of at least two accessory proteins for anaerobic nitric oxide (NO) reductase. Reduces the rubredoxin moiety of NO reductase. This Salmonella paratyphi C (strain RKS4594) protein is Nitric oxide reductase FlRd-NAD(+) reductase.